We begin with the raw amino-acid sequence, 346 residues long: Sensor histidine kinase GraS (346 aa).

A run of 2 helical transmembrane segments spans residues 15-35 and 43-63; these read MNWI…SLID and LFYI…LTYF. The Histidine kinase domain maps to 126–332; it reads EFVHDIKTPV…TVRLIFPLQN (207 aa).

As to quaternary structure, interacts with GraX.

It localises to the cell membrane. It catalyses the reaction ATP + protein L-histidine = ADP + protein N-phospho-L-histidine.. Functionally, member of the two-component regulatory system GraR/GraS involved in resistance against cationic antimicrobial peptides (CAMPs). Functions as a sensor protein kinase which phosphorylates GraR through the auxiliary protein GraX. In turn, GraR up-regulates many genes such as adhesins, exoproteins, transporters, toxins, and proteins involved in cell wall synthesis. Down-regulates the expression of many genes involved in RNA and amino acid synthesis or glycolysis. This chain is Sensor histidine kinase GraS (graS), found in Staphylococcus aureus (strain Mu50 / ATCC 700699).